We begin with the raw amino-acid sequence, 445 residues long: Glycine--tRNA ligase (445 aa).

Arg-97 and Glu-145 together coordinate substrate. ATP contacts are provided by residues 177–179 (RNE), 187–192 (FRTCEF), 262–263 (EV), and 308–311 (GLTR). 192–196 (FEQME) serves as a coordination point for substrate. A substrate-binding site is contributed by 304–308 (ETSAG).

This sequence belongs to the class-II aminoacyl-tRNA synthetase family. Homodimer.

The protein resides in the cytoplasm. The enzyme catalyses tRNA(Gly) + glycine + ATP = glycyl-tRNA(Gly) + AMP + diphosphate. Its function is as follows. Catalyzes the attachment of glycine to tRNA(Gly). This is Glycine--tRNA ligase from Borrelia garinii subsp. bavariensis (strain ATCC BAA-2496 / DSM 23469 / PBi) (Borreliella bavariensis).